Here is a 184-residue protein sequence, read N- to C-terminus: Ribosome-recycling factor (184 aa).

Belongs to the RRF family.

The protein localises to the cytoplasm. In terms of biological role, responsible for the release of ribosomes from messenger RNA at the termination of protein biosynthesis. May increase the efficiency of translation by recycling ribosomes from one round of translation to another. The chain is Ribosome-recycling factor from Bifidobacterium animalis subsp. lactis (strain AD011).